The primary structure comprises 133 residues: Small ribosomal subunit protein uS8 (133 aa).

This sequence belongs to the universal ribosomal protein uS8 family. In terms of assembly, part of the 30S ribosomal subunit. Contacts proteins S5 and S12.

Functionally, one of the primary rRNA binding proteins, it binds directly to 16S rRNA central domain where it helps coordinate assembly of the platform of the 30S subunit. The chain is Small ribosomal subunit protein uS8 from Deinococcus deserti (strain DSM 17065 / CIP 109153 / LMG 22923 / VCD115).